The following is a 405-amino-acid chain: Intraflagellar transport protein 57 homolog (405 aa).

Residues 252 to 380 adopt a coiled-coil conformation; sequence ETLKTNILEN…AQLNLEVALL (129 aa).

It belongs to the IFT57 family.

The protein localises to the cytoplasm. Its subcellular location is the cytoskeleton. The protein resides in the cilium basal body. Functionally, required for the formation of cilia. The protein is Intraflagellar transport protein 57 homolog of Drosophila melanogaster (Fruit fly).